An 883-amino-acid polypeptide reads, in one-letter code: Translation initiation factor IF-2 (883 aa).

Disordered regions lie at residues 1-96 (MVDT…RSGM) and 132-259 (QRRA…RGRL). Over residues 57-66 (PAEPAAAAPE) the composition is skewed to low complexity. Residues 72–87 (TPAPPAVSPRQQPRPS) are compositionally biased toward pro residues. The span at 132-188 (QRRAAQELVDKAEREAAEVRRKAEEERHRHEEETKRKAETEAKKRFGEAEPAKKPAD) shows a compositional bias: basic and acidic residues. Low complexity predominate over residues 191-217 (PASTSTTTTAPRAPVTTTTRPPAVAAE). The 172-residue stretch at 380 to 551 (PRSPVVTVMG…ALQAELLDLK (172 aa)) folds into the tr-type G domain. The tract at residues 389–396 (GHVDHGKT) is G1. GTP is bound at residue 389–396 (GHVDHGKT). The G2 stretch occupies residues 414-418 (GITQH). Residues 437–440 (DTPG) form a G3 region. Residues 437-441 (DTPGH) and 491-494 (NKID) contribute to the GTP site. The interval 491–494 (NKID) is G4. The interval 527 to 529 (SAK) is G5.

Belongs to the TRAFAC class translation factor GTPase superfamily. Classic translation factor GTPase family. IF-2 subfamily.

It is found in the cytoplasm. Its function is as follows. One of the essential components for the initiation of protein synthesis. Protects formylmethionyl-tRNA from spontaneous hydrolysis and promotes its binding to the 30S ribosomal subunits. Also involved in the hydrolysis of GTP during the formation of the 70S ribosomal complex. This Rhodopseudomonas palustris (strain BisB5) protein is Translation initiation factor IF-2.